The sequence spans 190 residues: Interferon alpha-7 (190 aa).

Residues 1–23 form the signal peptide; that stretch reads MARLCAFLMVLAVMSYWPTCCLG. 2 disulfides stabilise this stretch: C24–C122 and C52–C162. N-linked (GlcNAc...) asparagine glycosylation occurs at N101.

This sequence belongs to the alpha/beta interferon family.

The protein localises to the secreted. Produced by macrophages, IFN-alpha have antiviral activities. Interferon stimulates the production of two enzymes: a protein kinase and an oligoadenylate synthetase. This chain is Interferon alpha-7 (Ifna7), found in Mus musculus (Mouse).